The primary structure comprises 150 residues: MEKSFVMLKPDAVKRRLAGRIIARFEDRGLKIVAFKMLQIPEDLAMEHYQEHREKPFFRDLVDYITSAPVIAMVIEGKDCISLIRKMVGATNPAEADLGTIRGDFALETGRNIIHASDSPESAEREIKLFFDESEICSYEMPDREMIYEE.

Residues lysine 9, phenylalanine 57, arginine 85, threonine 91, arginine 102, and asparagine 112 each coordinate ATP. Histidine 115 (pros-phosphohistidine intermediate) is an active-site residue.

This sequence belongs to the NDK family. Mg(2+) is required as a cofactor.

It is found in the cytoplasm. The enzyme catalyses a 2'-deoxyribonucleoside 5'-diphosphate + ATP = a 2'-deoxyribonucleoside 5'-triphosphate + ADP. It catalyses the reaction a ribonucleoside 5'-diphosphate + ATP = a ribonucleoside 5'-triphosphate + ADP. Functionally, major role in the synthesis of nucleoside triphosphates other than ATP. The ATP gamma phosphate is transferred to the NDP beta phosphate via a ping-pong mechanism, using a phosphorylated active-site intermediate. In Methanothermobacter thermautotrophicus (strain ATCC 29096 / DSM 1053 / JCM 10044 / NBRC 100330 / Delta H) (Methanobacterium thermoautotrophicum), this protein is Nucleoside diphosphate kinase.